A 286-amino-acid chain; its full sequence is Ribosome-inactivating protein beta-momorcharin (286 aa).

A signal peptide spans 1 to 23 (MVKCLLLSFLIIAIFIGVPTAKG). The N-linked (GlcNAc...) asparagine glycan is linked to asparagine 74. Residues tyrosine 93, tyrosine 132, glutamate 181, and arginine 184 contribute to the active site.

It belongs to the ribosome-inactivating protein family. Type 1 RIP subfamily. Bound to a branched hexasaccharide.

It catalyses the reaction Endohydrolysis of the N-glycosidic bond at one specific adenosine on the 28S rRNA.. Irreversibly relaxes supercoiled DNA and catalyzes double-stranded breakage. Also acts as a ribosome inactivating protein. The polypeptide is Ribosome-inactivating protein beta-momorcharin (MAP30) (Momordica charantia (Bitter gourd)).